The primary structure comprises 750 residues: Probable methylmalonyl-CoA mutase large subunit (750 aa).

The (R)-methylmalonyl-CoA site is built by tyrosine 91, methionine 94, threonine 101, arginine 103, tyrosine 105, and serine 130. The cob(II)alamin site is built by phenylalanine 133 and alanine 155. (R)-methylmalonyl-CoA-binding residues include threonine 211 and glutamine 213. Cob(II)alamin-binding residues include valine 222 and arginine 223. Residues arginine 223, histidine 260, arginine 299, and serine 301 each contribute to the (R)-methylmalonyl-CoA site. Cob(II)alamin contacts are provided by glycine 349, glutamate 386, alanine 389, glycine 628, histidine 629, aspartate 630, arginine 631, serine 674, leucine 676, glycine 705, and threonine 728. Residues 616–748 (RPRILIAKMG…HRLAERLGYT (133 aa)) enclose the B12-binding domain.

Belongs to the methylmalonyl-CoA mutase family. In terms of assembly, heterodimer of an alpha and a beta chain. Adenosylcob(III)alamin serves as cofactor.

It catalyses the reaction (R)-methylmalonyl-CoA = succinyl-CoA. It functions in the pathway metabolic intermediate metabolism; propanoyl-CoA degradation; succinyl-CoA from propanoyl-CoA: step 3/3. In terms of biological role, catalyzes the isomerization of succinyl-CoA to methylmalonyl-CoA during synthesis of propionate from tricarboxylic acid-cycle intermediates. This is Probable methylmalonyl-CoA mutase large subunit (mutB) from Mycobacterium bovis (strain ATCC BAA-935 / AF2122/97).